The sequence spans 402 residues: D-mannonate dehydratase (402 aa).

2 residues coordinate substrate: Asn37 and His122. The Proton donor/acceptor role is filled by Tyr159. Asp210 serves as a coordination point for Mg(2+). His212 serves as the catalytic Proton donor/acceptor. Mg(2+) is bound by residues Glu236 and Glu262. Substrate is bound by residues Glu262, Arg283, His312, Asp316, and Glu339.

The protein belongs to the mandelate racemase/muconate lactonizing enzyme family. GalD subfamily. As to quaternary structure, homotetramer. Mg(2+) is required as a cofactor.

It catalyses the reaction D-mannonate = 2-dehydro-3-deoxy-D-gluconate + H2O. The protein operates within carbohydrate metabolism; pentose and glucuronate interconversion. Its function is as follows. Catalyzes the dehydration of D-mannonate. Has no detectable activity with a panel of 70 other acid sugars (in vitro). The protein is D-mannonate dehydratase (manD) of Novosphingobium aromaticivorans (strain ATCC 700278 / DSM 12444 / CCUG 56034 / CIP 105152 / NBRC 16084 / F199).